Consider the following 365-residue polypeptide: Fructose-1,6-bisphosphatase class 1 2 (365 aa).

Mg(2+) is bound by residues glutamate 100, aspartate 122, leucine 124, and aspartate 125. Substrate contacts are provided by residues 125–128 (DGSS) and asparagine 221. Glutamate 293 contacts Mg(2+).

This sequence belongs to the FBPase class 1 family. Homotetramer. It depends on Mg(2+) as a cofactor.

The protein localises to the cytoplasm. It carries out the reaction beta-D-fructose 1,6-bisphosphate + H2O = beta-D-fructose 6-phosphate + phosphate. It participates in carbohydrate biosynthesis; gluconeogenesis. The protein is Fructose-1,6-bisphosphatase class 1 2 of Leptothrix cholodnii (strain ATCC 51168 / LMG 8142 / SP-6) (Leptothrix discophora (strain SP-6)).